A 68-amino-acid chain; its full sequence is Molybdenum-pterin-binding protein 3 (68 aa).

Residues 2-68 enclose the Mop domain; it reads SISARNQLKG…IKSTDVMILA (67 aa).

Binds one mole of molybdenum per mole of protein and contains a pterin. The sequence is that of Molybdenum-pterin-binding protein 3 (mopIII) from Clostridium pasteurianum.